The primary structure comprises 503 residues: Aromatase (503 aa).

Substrate-binding residues include aspartate 309 and methionine 374. A heme-binding site is contributed by cysteine 437.

It belongs to the cytochrome P450 family. Heme is required as a cofactor.

The protein localises to the membrane. The enzyme catalyses testosterone + 3 reduced [NADPH--hemoprotein reductase] + 3 O2 = 17beta-estradiol + formate + 3 oxidized [NADPH--hemoprotein reductase] + 4 H2O + 4 H(+). The catalysed reaction is androst-4-ene-3,17-dione + 3 reduced [NADPH--hemoprotein reductase] + 3 O2 = estrone + formate + 3 oxidized [NADPH--hemoprotein reductase] + 4 H2O + 4 H(+). Its function is as follows. Catalyzes the formation of aromatic C18 estrogens from C19 androgens. The sequence is that of Aromatase (CYP19A1) from Callithrix jacchus (White-tufted-ear marmoset).